Here is a 236-residue protein sequence, read N- to C-terminus: MNHEAPLLEVGFLTFNKSTVMMLLVAAIIVFLIAFISTRSLKLKPTGMQNFMEWIMDFVKNIIKSNMDWKTGGRFHILGITLIMFIAVSNLLGLPFSIVYGHELWWKSPTADPTVTMTLATMILVLSHFYGVKMKGTGHYAGTFFKPMSFMFPLKLVEEFANTLTLGLRLYGNIYAGEILLGLLAGLASSGAVGFIGAIVPMMAWQGFSIFIGFIQAFIFTMLTMVYMAHKVSDDH.

Transmembrane regions (helical) follow at residues 18–38 (STVM…FIST), 79–99 (GITL…FSIV), 112–132 (DPTV…FYGV), 174–194 (IYAG…GAVG), and 205–227 (WQGF…TMVY).

The protein belongs to the ATPase A chain family. In terms of assembly, F-type ATPases have 2 components, CF(1) - the catalytic core - and CF(0) - the membrane proton channel. CF(1) has five subunits: alpha(3), beta(3), gamma(1), delta(1), epsilon(1). CF(0) has three main subunits: a(1), b(2) and c(9-12). The alpha and beta chains form an alternating ring which encloses part of the gamma chain. CF(1) is attached to CF(0) by a central stalk formed by the gamma and epsilon chains, while a peripheral stalk is formed by the delta and b chains.

The protein resides in the cell membrane. Key component of the proton channel; it plays a direct role in the translocation of protons across the membrane. This chain is ATP synthase subunit a, found in Lysinibacillus sphaericus (strain C3-41).